The sequence spans 391 residues: D-gluconate/D-galactonate dehydratase (391 aa).

Position 198 (glutamate 198) interacts with Mg(2+). Histidine 200 acts as the Proton donor in catalysis. The Mg(2+) site is built by glutamate 224 and glutamate 250. The active-site Proton acceptor is the histidine 300.

Belongs to the mandelate racemase/muconate lactonizing enzyme family. GaD subfamily. As to quaternary structure, homooctamer. Mg(2+) serves as cofactor.

It carries out the reaction D-gluconate = 2-dehydro-3-deoxy-D-gluconate + H2O. The enzyme catalyses D-galactonate = 2-dehydro-3-deoxy-D-galactonate + H2O. The protein operates within carbohydrate acid metabolism; D-gluconate degradation. Its function is as follows. Involved in the degradation of glucose and galactose via the nonphosphorylative variant of Entner-Doudoroff pathway. Catalyzes the dehydration of gluconate to produce 2-keto-3-deoxygluconate (KDG). It is also able to catalyze the dehydration of galactonate to produce 2-keto-3-deoxygalactonate (KDGal). This is D-gluconate/D-galactonate dehydratase from Picrophilus torridus (strain ATCC 700027 / DSM 9790 / JCM 10055 / NBRC 100828 / KAW 2/3).